The primary structure comprises 284 residues: Tropomyosin (284 aa).

The stretch at 1–273 (MDAIKKKMVA…KEKYKAISDE (273 aa)) forms a coiled coil. Over residues 110 to 130 (SGKLEEASKAADESERNRKVL) the composition is skewed to basic and acidic residues. Residues 110-134 (SGKLEEASKAADESERNRKVLENLN) form a disordered region.

The protein belongs to the tropomyosin family. As to quaternary structure, homodimer.

Functionally, tropomyosin, in association with the troponin complex, plays a central role in the calcium dependent regulation of muscle contraction. This Perna viridis (Asian green mussel) protein is Tropomyosin.